The sequence spans 262 residues: Thiamine thiazole synthase (262 aa).

Residues Ala-36, Glu-55–Lys-56, Gly-63, Val-127, and His-154–Asp-156 each bind NAD(+). Fe cation-binding residues include Asp-156 and His-171. Met-224 contributes to the NAD(+) binding site. Position 234 (Arg-234) interacts with glycine.

The protein belongs to the THI4 family. As to quaternary structure, homooctamer; tetramer of dimers. Requires Fe(2+) as cofactor.

It carries out the reaction hydrogen sulfide + glycine + NAD(+) = ADP-5-ethyl-4-methylthiazole-2-carboxylate + nicotinamide + 3 H2O + H(+). It participates in cofactor biosynthesis; thiamine diphosphate biosynthesis. In terms of biological role, involved in the biosynthesis of the thiazole moiety of thiamine. Catalyzes the conversion of NAD and glycine to adenosine diphosphate 5-(2-hydroxyethyl)-4-methylthiazole-2-carboxylate (ADT), an adenylated thiazole intermediate, using free sulfide as a source of sulfur. This is Thiamine thiazole synthase from Methanothrix thermoacetophila (strain DSM 6194 / JCM 14653 / NBRC 101360 / PT) (Methanosaeta thermophila).